A 384-amino-acid chain; its full sequence is GTPase Obg (384 aa).

The 159-residue stretch at 1 to 159 folds into the Obg domain; sequence MKFIDEAKIE…RSLQLELKVL (159 aa). Positions 20–46 are disordered; it reads ATSFRREKFVPRGGPDGGDGGKGGSVW. Over residues 33–43 the composition is skewed to gly residues; it reads GPDGGDGGKGG. An OBG-type G domain is found at 160-348; it reads ADVGLLGMPN…LVHQINQYLT (189 aa). GTP contacts are provided by residues 166–173, 191–195, 213–216, 284–287, and 329–331; these read GMPNAGKS, FTTLH, DIPG, NKLD, and SAL. 2 residues coordinate Mg(2+): Ser173 and Thr193.

Belongs to the TRAFAC class OBG-HflX-like GTPase superfamily. OBG GTPase family. Monomer. Mg(2+) serves as cofactor.

It localises to the cytoplasm. Its function is as follows. An essential GTPase which binds GTP, GDP and possibly (p)ppGpp with moderate affinity, with high nucleotide exchange rates and a fairly low GTP hydrolysis rate. Plays a role in control of the cell cycle, stress response, ribosome biogenesis and in those bacteria that undergo differentiation, in morphogenesis control. This is GTPase Obg from Neisseria meningitidis serogroup B (strain ATCC BAA-335 / MC58).